Reading from the N-terminus, the 275-residue chain is Elongation factor Ts (275 aa).

Positions 76-79 (TDFV) are involved in Mg(2+) ion dislocation from EF-Tu.

The protein belongs to the EF-Ts family.

Its subcellular location is the cytoplasm. Associates with the EF-Tu.GDP complex and induces the exchange of GDP to GTP. It remains bound to the aminoacyl-tRNA.EF-Tu.GTP complex up to the GTP hydrolysis stage on the ribosome. This Mycolicibacterium paratuberculosis (strain ATCC BAA-968 / K-10) (Mycobacterium paratuberculosis) protein is Elongation factor Ts.